A 153-amino-acid polypeptide reads, in one-letter code: 3-hydroxyacyl-[acyl-carrier-protein] dehydratase FabZ (153 aa).

The active site involves His-59.

The protein belongs to the thioester dehydratase family. FabZ subfamily.

It is found in the cytoplasm. It carries out the reaction a (3R)-hydroxyacyl-[ACP] = a (2E)-enoyl-[ACP] + H2O. Functionally, involved in unsaturated fatty acids biosynthesis. Catalyzes the dehydration of short chain beta-hydroxyacyl-ACPs and long chain saturated and unsaturated beta-hydroxyacyl-ACPs. The sequence is that of 3-hydroxyacyl-[acyl-carrier-protein] dehydratase FabZ from Thermosynechococcus vestitus (strain NIES-2133 / IAM M-273 / BP-1).